The following is a 149-amino-acid chain: Large ribosomal subunit protein bL9 (149 aa).

Belongs to the bacterial ribosomal protein bL9 family.

Binds to the 23S rRNA. In Endomicrobium trichonymphae, this protein is Large ribosomal subunit protein bL9.